Reading from the N-terminus, the 718-residue chain is Ribosomal RNA large subunit methyltransferase K/L (718 aa).

One can recognise a THUMP domain in the interval 43–154 (TQYRILLWSR…QDELVVSLDL (112 aa)).

The protein belongs to the methyltransferase superfamily. RlmKL family.

Its subcellular location is the cytoplasm. It catalyses the reaction guanosine(2445) in 23S rRNA + S-adenosyl-L-methionine = N(2)-methylguanosine(2445) in 23S rRNA + S-adenosyl-L-homocysteine + H(+). The enzyme catalyses guanosine(2069) in 23S rRNA + S-adenosyl-L-methionine = N(2)-methylguanosine(2069) in 23S rRNA + S-adenosyl-L-homocysteine + H(+). In terms of biological role, specifically methylates the guanine in position 2445 (m2G2445) and the guanine in position 2069 (m7G2069) of 23S rRNA. The chain is Ribosomal RNA large subunit methyltransferase K/L from Histophilus somni (strain 129Pt) (Haemophilus somnus).